The sequence spans 4471 residues: Dynein axonemal heavy chain 10 (4471 aa).

Residues 1–1793 (MVPEEVEVEI…NIRQCTGTFG (1793 aa)) form a stem region. A disordered region spans residues 46–65 (TESLGQPLNREDEEMDKEIS). 4 coiled-coil regions span residues 203–223 (NVQK…GEIK), 602–622 (QEVK…EDRK), 1071–1106 (KLLN…EDLK), and 1217–1245 (VELL…KLFD). N1074 carries an N-linked (GlcNAc...) asparagine glycan. A TPR 1 repeat occupies 1221–1254 (GVYERELARHEKSRQELANAEKLFDLPITMYPEL). AAA stretches follow at residues 1794–2015 (YGYE…VLVM), 2075–2294 (DAVE…VIVE), 2417–2665 (IHAP…VFNG), and 2765–3014 (EYNE…LRRS). A GPAGTGKT motif motif is present at residues 1832-1839 (GPAGTGKT). 1832–1839 (GPAGTGKT) lines the ATP pocket. A CFDEFNR motif motif is present at residues 1882-1888 (CFDEFNR). ATP-binding positions include 2113–2120 (GPTRGGKS) and 2455–2462 (GESGTSKT). 2 TPR repeats span residues 2736 to 2769 (MALH…YNES) and 2771 to 2797 (TKMN…MDRG). Positions 2747-2770 (EDIQDYEAAKALFQEILEEYNESN) form a coiled coil. 2803–2810 (GVGGSGKQ) contributes to the ATP binding site. Residues 3029 to 3313 (YSKLLDEKTQ…QKLQEEAEIM (285 aa)) form a stalk region. 3 coiled-coil regions span residues 3045-3131 (KRLD…LAEV), 3257-3327 (KREK…ISGL), and 3567-3638 (ERRE…EKTA). The segment at 3399–3629 (LTDDVEISRW…TKSKATEVSE (231 aa)) is AAA 5. One copy of the TPR 4 repeat lies at 3802–3837 (WQEWYDLDSLEQFPVPLGYDNNITPFQKLLILRCFR). Residues 3845–4062 (VTDYVTVTMG…FQVCMEILNT (218 aa)) form an AAA 6 region. A TPR 5 repeat occupies 4074–4108 (RIPWGSLKYLIGEVMYGGRAIDSFDRRILTIYMDE). The stretch at 4235–4260 (LLQELERFNKLVVRMTKSLAELQRAL) forms a coiled coil.

It belongs to the dynein heavy chain family. Consists of at least two heavy chains and a number of intermediate and light chains. In terms of tissue distribution, expressed primarily in trachea and testis, 2 tissues containing axonemal structures. Also expressed in brain but not in adult heart.

It is found in the cytoplasm. It localises to the cytoskeleton. Its subcellular location is the cilium axoneme. Force generating protein of respiratory cilia. Produces force towards the minus ends of microtubules. Dynein has ATPase activity; the force-producing power stroke is thought to occur on release of ADP. Involved in sperm motility; implicated in sperm flagellar assembly. Probable inner arm dynein heavy chain. The polypeptide is Dynein axonemal heavy chain 10 (DNAH10) (Homo sapiens (Human)).